A 488-amino-acid chain; its full sequence is Cobyric acid synthase (488 aa).

The region spanning 252-442 is the GATase cobBQ-type domain; that stretch reads RTRICVPILP…VHGLFASDAF (191 aa). The Nucleophile role is filled by C334. H434 is an active-site residue.

Belongs to the CobB/CobQ family. CobQ subfamily.

It functions in the pathway cofactor biosynthesis; adenosylcobalamin biosynthesis. Functionally, catalyzes amidations at positions B, D, E, and G on adenosylcobyrinic A,C-diamide. NH(2) groups are provided by glutamine, and one molecule of ATP is hydrogenolyzed for each amidation. The polypeptide is Cobyric acid synthase (Xanthobacter autotrophicus (strain ATCC BAA-1158 / Py2)).